We begin with the raw amino-acid sequence, 285 residues long: Extracellular metalloprotease SMAC_06893 (285 aa).

Residues 1-18 (MQIKSLLLAAAAAPAALG) form the signal peptide. Position 197 (His-197) interacts with Zn(2+). The active site involves Glu-198. Residue His-201 participates in Zn(2+) binding. Residues Cys-233 and Cys-260 are joined by a disulfide bond. Asn-282 carries an N-linked (GlcNAc...) asparagine glycan.

It belongs to the peptidase M43B family.

Its subcellular location is the secreted. Secreted metalloproteinase that allows assimilation of proteinaceous substrates. This Sordaria macrospora (strain ATCC MYA-333 / DSM 997 / K(L3346) / K-hell) protein is Extracellular metalloprotease SMAC_06893.